The chain runs to 32 residues: Coenzyme PQQ synthesis protein A (32 aa).

The segment at residues 16–20 is a cross-link (pyrroloquinoline quinone (Glu-Tyr)); the sequence is EINMY.

The protein belongs to the PqqA family.

It functions in the pathway cofactor biosynthesis; pyrroloquinoline quinone biosynthesis. Required for coenzyme pyrroloquinoline quinone (PQQ) biosynthesis. PQQ is probably formed by cross-linking a specific glutamate to a specific tyrosine residue and excising these residues from the peptide. In Dinoroseobacter shibae (strain DSM 16493 / NCIMB 14021 / DFL 12), this protein is Coenzyme PQQ synthesis protein A.